Consider the following 318-residue polypeptide: Trans-prenyltransferase (318 aa).

A helical membrane pass occupies residues 1-21 (MLHLIYISIIVVLIIILISYT). Lysine 85, arginine 88, and histidine 122 together coordinate isopentenyl diphosphate. Positions 129 and 135 each coordinate Mg(2+). Arginine 140 is a dimethylallyl diphosphate binding site. Arginine 141 serves as a coordination point for isopentenyl diphosphate. Positions 216, 217, and 254 each coordinate dimethylallyl diphosphate.

It belongs to the FPP/GGPP synthase family. Asfivirus trans-prenyltransferase subfamily. Mg(2+) serves as cofactor.

Its subcellular location is the host endoplasmic reticulum. It is found in the host membrane. It carries out the reaction isopentenyl diphosphate + dimethylallyl diphosphate = (2E)-geranyl diphosphate + diphosphate. The enzyme catalyses isopentenyl diphosphate + (2E)-geranyl diphosphate = (2E,6E)-farnesyl diphosphate + diphosphate. It catalyses the reaction isopentenyl diphosphate + (2E,6E)-farnesyl diphosphate = (2E,6E,10E)-geranylgeranyl diphosphate + diphosphate. The catalysed reaction is isopentenyl diphosphate + (2E,6E,10E)-geranylgeranyl diphosphate = (2E,6E,10E,14E)-geranylfarnesyl diphosphate + diphosphate. Its pathway is isoprenoid biosynthesis; farnesyl diphosphate biosynthesis; farnesyl diphosphate from geranyl diphosphate and isopentenyl diphosphate: step 1/1. It participates in isoprenoid biosynthesis; geranyl diphosphate biosynthesis; geranyl diphosphate from dimethylallyl diphosphate and isopentenyl diphosphate: step 1/1. It functions in the pathway isoprenoid biosynthesis; geranylgeranyl diphosphate biosynthesis; geranylgeranyl diphosphate from farnesyl diphosphate and isopentenyl diphosphate: step 1/1. Trans-prenyltransferase that catalyzes the sequential condensation of isopentenyl diphosphate (IPP) with different allylic diphosphates, such as dimethylallyl diphosphate (DMAPP), geranyl diphosphate (GPP), farnesyl diphosphate (FPP) and geranylgeranyl diphosphate (GGPP), farnesyl diphosphate being the best allylic substrate. The chain is Trans-prenyltransferase from Ornithodoros (relapsing fever ticks).